The chain runs to 430 residues: Glutamate-1-semialdehyde 2,1-aminomutase (430 aa).

Lys265 is subject to N6-(pyridoxal phosphate)lysine.

The protein belongs to the class-III pyridoxal-phosphate-dependent aminotransferase family. HemL subfamily. As to quaternary structure, homodimer. Requires pyridoxal 5'-phosphate as cofactor.

Its subcellular location is the cytoplasm. The catalysed reaction is (S)-4-amino-5-oxopentanoate = 5-aminolevulinate. The protein operates within porphyrin-containing compound metabolism; protoporphyrin-IX biosynthesis; 5-aminolevulinate from L-glutamyl-tRNA(Glu): step 2/2. The chain is Glutamate-1-semialdehyde 2,1-aminomutase from Shewanella baltica (strain OS155 / ATCC BAA-1091).